The following is a 522-amino-acid chain: GMP synthase [glutamine-hydrolyzing] (522 aa).

The region spanning 9–204 is the Glutamine amidotransferase type-1 domain; the sequence is KILILDFGAQ…VVDICGCQTL (196 aa). Cysteine 86 acts as the Nucleophile in catalysis. Active-site residues include histidine 178 and glutamate 180. The GMPS ATP-PPase domain occupies 205–397; sequence WTSANIIEDQ…LGLPHAMVYR (193 aa). 232–238 is an ATP binding site; sequence SGGVDSS.

Homodimer.

The catalysed reaction is XMP + L-glutamine + ATP + H2O = GMP + L-glutamate + AMP + diphosphate + 2 H(+). It functions in the pathway purine metabolism; GMP biosynthesis; GMP from XMP (L-Gln route): step 1/1. Functionally, catalyzes the synthesis of GMP from XMP. The chain is GMP synthase [glutamine-hydrolyzing] from Xylella fastidiosa (strain M23).